A 252-amino-acid polypeptide reads, in one-letter code: Eukaryotic translation initiation factor 3 subunit J (252 aa).

Disordered stretches follow at residues 24-107 (VPAG…TPEE) and 209-232 (KQSK…TMKD). A compositionally biased stretch (acidic residues) spans 36–56 (EDEEDDVKDNWDDEEEEEEVK). Basic and acidic residues predominate over residues 57 to 107 (EAEVKQEPKVSEKKKIAEKIKEKEKQQKKKQEELKKRLEAPEEHKELTPEE). Residues 65–130 (KVSEKKKIAE…ESDLELAKET (66 aa)) adopt a coiled-coil conformation.

This sequence belongs to the eIF-3 subunit J family. As to quaternary structure, component of the eukaryotic translation initiation factor 3 (eIF-3) complex, which is composed of 13 subunits: EIF3A, EIF3B, EIF3C, EIF3D, EIF3E, EIF3F, EIF3G, EIF3H, EIF3I, EIF3J, EIF3K, EIF3L and EIF3M.

The protein resides in the cytoplasm. Functionally, component of the eukaryotic translation initiation factor 3 (eIF-3) complex, which is involved in protein synthesis of a specialized repertoire of mRNAs and, together with other initiation factors, stimulates binding of mRNA and methionyl-tRNAi to the 40S ribosome. The eIF-3 complex specifically targets and initiates translation of a subset of mRNAs involved in cell proliferation. The sequence is that of Eukaryotic translation initiation factor 3 subunit J from Gallus gallus (Chicken).